Reading from the N-terminus, the 478-residue chain is Protein ZINC INDUCED FACILITATOR-LIKE 1 (478 aa).

12 helical membrane-spanning segments follow: residues 43–63, 81–101, 108–128, 130–150, 169–189, 208–228, 280–300, 317–337, 346–367, 378–398, 415–435, and 453–473; these read IIVL…YFMI, FVGC…GLVA, PVIL…GLSL, FWMA…LGPI, AVST…GFLA, FPFF…TIVS, IIVY…FSLW, VGSV…SLYS, IIVT…PLIA, VTSA…GLFI, IAMT…GIIF, and VFFI…KPFL.

The protein belongs to the major facilitator superfamily. Predominantly expressed in roots and stomatal guard cells. Detected in anther stamen filaments and shoot apical meristem. In the mature portion of roots, restricted to the cortex. At the root tip, highly expressed in both the cortical and epidermal cell layers of the apical meristem and the transition zone, while absent from the quiescent center or the columella cells. Not detected in lateral root primordia.

Its subcellular location is the cell membrane. The protein resides in the vacuole membrane. In terms of biological role, major facilitator superfamily (MFS) transporter probably involved in 2,4-dichlorophenoxyacetic acid (2,4-D) export. K(+) may be the physiological substrate of the transporter. Its function is as follows. Modulates root auxin-related processes. Involved in auxin efflux and acts as a positive regulator of shootward transport at the root apex. May mediate proton efflux from the vacuolar compartment. Mediates drought stress tolerance by regulating stomatal closure. In Arabidopsis thaliana (Mouse-ear cress), this protein is Protein ZINC INDUCED FACILITATOR-LIKE 1 (ZIFL1).